A 265-amino-acid chain; its full sequence is Cytosolic Fe-S cluster assembly factor NUBP2 homolog (265 aa).

Residue 22–29 (GKGGVGKS) coordinates ATP. 2 residues coordinate [4Fe-4S] cluster: C196 and C199.

The protein belongs to the Mrp/NBP35 ATP-binding proteins family. NUBP2/CFD1 subfamily. Heterotetramer of 2 NUBP1 and 2 NUBP2 chains. It depends on [4Fe-4S] cluster as a cofactor.

The protein localises to the cytoplasm. In terms of biological role, component of the cytosolic iron-sulfur (Fe/S) protein assembly (CIA) machinery. Required for maturation of extramitochondrial Fe-S proteins. The NUBP1-NUBP2 heterotetramer forms a Fe-S scaffold complex, mediating the de novo assembly of an Fe-S cluster and its transfer to target apoproteins. This Trichoplax adhaerens (Trichoplax reptans) protein is Cytosolic Fe-S cluster assembly factor NUBP2 homolog.